The following is a 773-amino-acid chain: Membrane-bound aldehyde dehydrogenase [pyrroloquinoline-quinone] (773 aa).

A signal peptide (tat-type signal) is located at residues 1–44 (MGRLNRFRLGKDGRREQASLSRRGFLVTSLGAGVMFGFARPSSA).

Requires pyrroloquinoline quinone as cofactor. In terms of processing, predicted to be exported by the Tat system. The position of the signal peptide cleavage has been experimentally proven.

The protein localises to the cell inner membrane. The enzyme catalyses an aldehyde + a quinone + H2O = a quinol + a carboxylate + H(+). The sequence is that of Membrane-bound aldehyde dehydrogenase [pyrroloquinoline-quinone] from Gluconacetobacter polyoxogenes (Acetobacter polyoxogenes).